Reading from the N-terminus, the 149-residue chain is Inner membrane protein YidI (149 aa).

Over 1 to 8 the chain is Cytoplasmic; sequence MGIIAQNK. A helical transmembrane segment spans residues 9-31; sequence ISSLGMLFGAIALMMGIIHFSFG. Over 32–77 the chain is Periplasmic; sequence PFSAPPPTFESIVADKTAEIKRGLLAGIKGEKITTVEKKEDVDVDK. Residues 78–97 traverse the membrane as a helical segment; the sequence is ILNQSGIALAIAALLCAFIG. Over 98-117 the chain is Cytoplasmic; sequence GMRKENRWGIRGALVFGGGT. A helical membrane pass occupies residues 118–140; that stretch reads LAFHTLLFGIGIVCSILLIFLIF. Over 141 to 149 the chain is Periplasmic; it reads SFLTGGSLV.

The protein localises to the cell inner membrane. The sequence is that of Inner membrane protein YidI (yidI) from Escherichia coli (strain K12).